The sequence spans 558 residues: Membrane protein insertase YidC (558 aa).

The next 5 membrane-spanning stretches (helical) occupy residues Ile3–Trp23, Phe364–Phe384, Leu438–Val458, Pro477–Pro497, and Met508–Leu528.

The protein belongs to the OXA1/ALB3/YidC family. Type 1 subfamily. Interacts with the Sec translocase complex via SecD. Specifically interacts with transmembrane segments of nascent integral membrane proteins during membrane integration.

The protein localises to the cell inner membrane. In terms of biological role, required for the insertion and/or proper folding and/or complex formation of integral membrane proteins into the membrane. Involved in integration of membrane proteins that insert both dependently and independently of the Sec translocase complex, as well as at least some lipoproteins. Aids folding of multispanning membrane proteins. The chain is Membrane protein insertase YidC from Burkholderia mallei (strain NCTC 10247).